Here is a 331-residue protein sequence, read N- to C-terminus: Pyruvate synthase subunit PorB (331 aa).

The [4Fe-4S] cluster site is built by Cys-21, Cys-24, Cys-59, and Cys-222.

In terms of assembly, heterotetramer of one alpha, one beta, one delta and one gamma chain. It depends on [4Fe-4S] cluster as a cofactor.

It carries out the reaction 2 oxidized [2Fe-2S]-[ferredoxin] + pyruvate + CoA = 2 reduced [2Fe-2S]-[ferredoxin] + acetyl-CoA + CO2 + H(+). The protein is Pyruvate synthase subunit PorB (porB) of Pyrococcus horikoshii (strain ATCC 700860 / DSM 12428 / JCM 9974 / NBRC 100139 / OT-3).